Consider the following 188-residue polypeptide: Elongation factor P (188 aa).

Belongs to the elongation factor P family.

It localises to the cytoplasm. It functions in the pathway protein biosynthesis; polypeptide chain elongation. Its function is as follows. Involved in peptide bond synthesis. Stimulates efficient translation and peptide-bond synthesis on native or reconstituted 70S ribosomes in vitro. Probably functions indirectly by altering the affinity of the ribosome for aminoacyl-tRNA, thus increasing their reactivity as acceptors for peptidyl transferase. The chain is Elongation factor P from Methylobacterium sp. (strain 4-46).